Consider the following 481-residue polypeptide: Glutamyl-tRNA(Gln) amidotransferase subunit A (481 aa).

Residues K76 and S151 each act as charge relay system in the active site. S175 serves as the catalytic Acyl-ester intermediate.

The protein belongs to the amidase family. GatA subfamily. As to quaternary structure, heterotrimer of A, B and C subunits.

It catalyses the reaction L-glutamyl-tRNA(Gln) + L-glutamine + ATP + H2O = L-glutaminyl-tRNA(Gln) + L-glutamate + ADP + phosphate + H(+). Its function is as follows. Allows the formation of correctly charged Gln-tRNA(Gln) through the transamidation of misacylated Glu-tRNA(Gln) in organisms which lack glutaminyl-tRNA synthetase. The reaction takes place in the presence of glutamine and ATP through an activated gamma-phospho-Glu-tRNA(Gln). The protein is Glutamyl-tRNA(Gln) amidotransferase subunit A of Neisseria meningitidis serogroup C / serotype 2a (strain ATCC 700532 / DSM 15464 / FAM18).